The primary structure comprises 360 residues: Phosphoserine aminotransferase (360 aa).

R42 is a binding site for L-glutamate. Pyridoxal 5'-phosphate-binding residues include W102, T152, D171, and Q194. N6-(pyridoxal phosphate)lysine is present on K195. 237-238 lines the pyridoxal 5'-phosphate pocket; that stretch reads NT.

Belongs to the class-V pyridoxal-phosphate-dependent aminotransferase family. SerC subfamily. In terms of assembly, homodimer. The cofactor is pyridoxal 5'-phosphate.

It is found in the cytoplasm. The catalysed reaction is O-phospho-L-serine + 2-oxoglutarate = 3-phosphooxypyruvate + L-glutamate. The enzyme catalyses 4-(phosphooxy)-L-threonine + 2-oxoglutarate = (R)-3-hydroxy-2-oxo-4-phosphooxybutanoate + L-glutamate. It functions in the pathway amino-acid biosynthesis; L-serine biosynthesis; L-serine from 3-phospho-D-glycerate: step 2/3. Its pathway is cofactor biosynthesis; pyridoxine 5'-phosphate biosynthesis; pyridoxine 5'-phosphate from D-erythrose 4-phosphate: step 3/5. In terms of biological role, catalyzes the reversible conversion of 3-phosphohydroxypyruvate to phosphoserine and of 3-hydroxy-2-oxo-4-phosphonooxybutanoate to phosphohydroxythreonine. This Coxiella burnetii (strain CbuK_Q154) (Coxiella burnetii (strain Q154)) protein is Phosphoserine aminotransferase.